Consider the following 373-residue polypeptide: Histidinol-phosphate aminotransferase (373 aa).

Position 229 is an N6-(pyridoxal phosphate)lysine (K229).

The protein belongs to the class-II pyridoxal-phosphate-dependent aminotransferase family. Histidinol-phosphate aminotransferase subfamily. Pyridoxal 5'-phosphate is required as a cofactor.

The enzyme catalyses L-histidinol phosphate + 2-oxoglutarate = 3-(imidazol-4-yl)-2-oxopropyl phosphate + L-glutamate. The protein operates within amino-acid biosynthesis; L-histidine biosynthesis; L-histidine from 5-phospho-alpha-D-ribose 1-diphosphate: step 7/9. This Methanothermobacter thermautotrophicus (strain ATCC 29096 / DSM 1053 / JCM 10044 / NBRC 100330 / Delta H) (Methanobacterium thermoautotrophicum) protein is Histidinol-phosphate aminotransferase (hisC).